A 459-amino-acid chain; its full sequence is ATP synthase subunit beta 1 (459 aa).

An ATP-binding site is contributed by 148–155 (GGAGVGKT).

This sequence belongs to the ATPase alpha/beta chains family. As to quaternary structure, F-type ATPases have 2 components, CF(1) - the catalytic core - and CF(0) - the membrane proton channel. CF(1) has five subunits: alpha(3), beta(3), gamma(1), delta(1), epsilon(1). CF(0) has three main subunits: a(1), b(2) and c(9-12). The alpha and beta chains form an alternating ring which encloses part of the gamma chain. CF(1) is attached to CF(0) by a central stalk formed by the gamma and epsilon chains, while a peripheral stalk is formed by the delta and b chains.

It is found in the cell inner membrane. The enzyme catalyses ATP + H2O + 4 H(+)(in) = ADP + phosphate + 5 H(+)(out). Its function is as follows. Produces ATP from ADP in the presence of a proton gradient across the membrane. The catalytic sites are hosted primarily by the beta subunits. The protein is ATP synthase subunit beta 1 of Nitrosospira multiformis (strain ATCC 25196 / NCIMB 11849 / C 71).